The chain runs to 194 residues: Anthranilate synthase component 2 (194 aa).

One can recognise a Glutamine amidotransferase type-1 domain in the interval 2 to 194 (KIFFIDNFDS…QSVGFLEGLL (193 aa)). An L-glutamine-binding site is contributed by 57–59 (GPG). Cys-84 (nucleophile; for GATase activity) is an active-site residue. L-glutamine-binding positions include Gln-88 and 134–135 (SL). Residues His-170 and Glu-172 each act as for GATase activity in the active site.

Heterotetramer consisting of two non-identical subunits: a beta subunit (TrpG) and a large alpha subunit (TrpE).

It catalyses the reaction chorismate + L-glutamine = anthranilate + pyruvate + L-glutamate + H(+). The protein operates within amino-acid biosynthesis; L-tryptophan biosynthesis; L-tryptophan from chorismate: step 1/5. Its function is as follows. Part of a heterotetrameric complex that catalyzes the two-step biosynthesis of anthranilate, an intermediate in the biosynthesis of L-tryptophan. In the first step, the glutamine-binding beta subunit (TrpG) of anthranilate synthase (AS) provides the glutamine amidotransferase activity which generates ammonia as a substrate that, along with chorismate, is used in the second step, catalyzed by the large alpha subunit of AS (TrpE) to produce anthranilate. In the absence of TrpG, TrpE can synthesize anthranilate directly from chorismate and high concentrations of ammonia. This chain is Anthranilate synthase component 2 (trpG), found in Helicobacter pylori (strain ATCC 700392 / 26695) (Campylobacter pylori).